A 101-amino-acid chain; its full sequence is DNA-binding protein Fis (101 aa).

The H-T-H motif DNA-binding region spans 77–96 (QTRAANMLGINRGTLRKKLK).

The protein belongs to the transcriptional regulatory Fis family. In terms of assembly, homodimer.

Activates ribosomal RNA transcription. Plays a direct role in upstream activation of rRNA promoters. This chain is DNA-binding protein Fis, found in Shewanella sediminis (strain HAW-EB3).